The sequence spans 186 residues: NADH dehydrogenase [ubiquinone] 1 beta subcomplex subunit 8, mitochondrial (186 aa).

Residues 1-28 constitute a mitochondrion transit peptide; sequence MAVARAGVLGVQWLQRASRNVMPLGART. Residues 133–153 form a helical membrane-spanning segment; it reads LFGFLAFMIFMCWVGDVYPVY.

It belongs to the complex I NDUFB8 subunit family. Complex I is composed of 45 different subunits.

It localises to the mitochondrion inner membrane. Its function is as follows. Accessory subunit of the mitochondrial membrane respiratory chain NADH dehydrogenase (Complex I), that is believed not to be involved in catalysis. Complex I functions in the transfer of electrons from NADH to the respiratory chain. The immediate electron acceptor for the enzyme is believed to be ubiquinone. The sequence is that of NADH dehydrogenase [ubiquinone] 1 beta subcomplex subunit 8, mitochondrial (NDUFB8) from Homo sapiens (Human).